Reading from the N-terminus, the 284-residue chain is MLSKQIPLGIYEKALPAGECWLERLQLAKTLGFDFVEMSVDETDDRLSRLDWSREQRLALVNAIVETGVRVPSMCLSAHRRFPLGSEDDAVRAQGLEIMRKAIQFAQDVGIRVIQLAGYDVYYQEANNETRRRFRDGLKESVEMASRAQVTLAMEIMDYPLMNSISKALGYTHYLNNPWFQLYPDIGNLSAWDNDVQMELQAGIGHIVAVHVKDTKPGVFKNVPFGEGVVDFERCFETLKQSGYCGPYLIEMWSETAEDPAAEVAKARDWVKARMAKAGMVEAA.

This sequence belongs to the L-ribulose-5-phosphate 3-epimerase family.

The catalysed reaction is L-ribulose 5-phosphate = L-xylulose 5-phosphate. It functions in the pathway cofactor degradation; L-ascorbate degradation; D-xylulose 5-phosphate from L-ascorbate: step 3/4. Its function is as follows. Catalyzes the isomerization of L-xylulose-5-phosphate to L-ribulose-5-phosphate. Is involved in the anaerobic L-ascorbate utilization. This Escherichia coli O17:K52:H18 (strain UMN026 / ExPEC) protein is L-ribulose-5-phosphate 3-epimerase UlaE.